A 229-amino-acid chain; its full sequence is UPF0758 protein Mbur_0382 (229 aa).

Residues 106 to 228 enclose the MPN domain; the sequence is KIRSANDVYS…YVSLKEEGYI (123 aa). 3 residues coordinate Zn(2+): His177, His179, and Asp190. Residues 177–190 carry the JAMM motif motif; the sequence is HNHPSGDPAPSRED.

It belongs to the UPF0758 family.

This chain is UPF0758 protein Mbur_0382, found in Methanococcoides burtonii (strain DSM 6242 / NBRC 107633 / OCM 468 / ACE-M).